A 285-amino-acid polypeptide reads, in one-letter code: Small ribosomal subunit protein uS3 (285 aa).

The region spanning 39–107 (VREFLKKKLK…PVAVNIEEVR (69 aa)) is the KH type-2 domain. The tract at residues 211–285 (GDAPVMRGED…RAAPPAAKGE (75 aa)) is disordered. A compositionally biased stretch (basic and acidic residues) spans 217–241 (RGEDRPEDDRRRRNPRGDRPGDRRG). Over residues 242–255 (PGAGRGGPGAGRGP) the composition is skewed to gly residues. 2 stretches are compositionally biased toward low complexity: residues 256 to 267 (ADGASAAPSGDA) and 276 to 285 (RAAPPAAKGE).

Belongs to the universal ribosomal protein uS3 family. As to quaternary structure, part of the 30S ribosomal subunit. Forms a tight complex with proteins S10 and S14.

Functionally, binds the lower part of the 30S subunit head. Binds mRNA in the 70S ribosome, positioning it for translation. The chain is Small ribosomal subunit protein uS3 from Leptothrix cholodnii (strain ATCC 51168 / LMG 8142 / SP-6) (Leptothrix discophora (strain SP-6)).